A 279-amino-acid chain; its full sequence is 3-methyl-2-oxobutanoate hydroxymethyltransferase (279 aa).

Aspartate 44 and aspartate 83 together coordinate Mg(2+). 3-methyl-2-oxobutanoate-binding positions include 44-45 (DS), aspartate 83, and lysine 113. Glutamate 115 is a binding site for Mg(2+). The Proton acceptor role is filled by glutamate 182.

This sequence belongs to the PanB family. Homodecamer; pentamer of dimers. Requires Mg(2+) as cofactor.

It is found in the cytoplasm. The enzyme catalyses 3-methyl-2-oxobutanoate + (6R)-5,10-methylene-5,6,7,8-tetrahydrofolate + H2O = 2-dehydropantoate + (6S)-5,6,7,8-tetrahydrofolate. It functions in the pathway cofactor biosynthesis; (R)-pantothenate biosynthesis; (R)-pantoate from 3-methyl-2-oxobutanoate: step 1/2. Its function is as follows. Catalyzes the reversible reaction in which hydroxymethyl group from 5,10-methylenetetrahydrofolate is transferred onto alpha-ketoisovalerate to form ketopantoate. This chain is 3-methyl-2-oxobutanoate hydroxymethyltransferase, found in Desulfotalea psychrophila (strain LSv54 / DSM 12343).